A 414-amino-acid polypeptide reads, in one-letter code: 2,3-diketo-5-methylthiopentyl-1-phosphate enolase (414 aa).

The active-site Proton acceptor is the Lys99. Substrate-binding positions include Lys148, 174–177, His265, Gly338, and 360–361; these read KDDE and GG. Mg(2+) contacts are provided by Lys174, Asp176, and Glu177. Position 174 is an N6-carboxylysine (Lys174).

Belongs to the RuBisCO large chain family. Type IV subfamily. Homodimer. The cofactor is Mg(2+).

The catalysed reaction is 5-methylsulfanyl-2,3-dioxopentyl phosphate = 2-hydroxy-5-methylsulfanyl-3-oxopent-1-enyl phosphate. Its pathway is amino-acid biosynthesis; L-methionine biosynthesis via salvage pathway; L-methionine from S-methyl-5-thio-alpha-D-ribose 1-phosphate: step 3/6. Its function is as follows. Catalyzes the enolization of 2,3-diketo-5-methylthiopentyl-1-phosphate (DK-MTP-1-P) into 2-hydroxy-3-keto-5-methylthiopentenyl-1-phosphate (HK-MTPenyl-1-P). The polypeptide is 2,3-diketo-5-methylthiopentyl-1-phosphate enolase (Bacillus cytotoxicus (strain DSM 22905 / CIP 110041 / 391-98 / NVH 391-98)).